Reading from the N-terminus, the 995-residue chain is Bifunctional glutamine synthetase adenylyltransferase/adenylyl-removing enzyme (995 aa).

The segment at 1 to 474 is adenylyl removase; it reads MNHSAPGNAD…HYEKLFEGDD (474 aa). GlnE regions lie at residues 122–333 and 637–853; these read RRMK…MKRQ and SYEE…MRRA. Residues 479–995 are adenylyl transferase; the sequence is AKLPALDYSA…LEGTSPASAR (517 aa).

Belongs to the GlnE family. Requires Mg(2+) as cofactor.

The enzyme catalyses [glutamine synthetase]-O(4)-(5'-adenylyl)-L-tyrosine + phosphate = [glutamine synthetase]-L-tyrosine + ADP. It catalyses the reaction [glutamine synthetase]-L-tyrosine + ATP = [glutamine synthetase]-O(4)-(5'-adenylyl)-L-tyrosine + diphosphate. In terms of biological role, involved in the regulation of glutamine synthetase GlnA, a key enzyme in the process to assimilate ammonia. When cellular nitrogen levels are high, the C-terminal adenylyl transferase (AT) inactivates GlnA by covalent transfer of an adenylyl group from ATP to specific tyrosine residue of GlnA, thus reducing its activity. Conversely, when nitrogen levels are low, the N-terminal adenylyl removase (AR) activates GlnA by removing the adenylyl group by phosphorolysis, increasing its activity. The regulatory region of GlnE binds the signal transduction protein PII (GlnB) which indicates the nitrogen status of the cell. The chain is Bifunctional glutamine synthetase adenylyltransferase/adenylyl-removing enzyme from Bradyrhizobium diazoefficiens (strain JCM 10833 / BCRC 13528 / IAM 13628 / NBRC 14792 / USDA 110).